The following is a 34-amino-acid chain: Potassium channel toxin (34 aa).

Cystine bridges form between Cys6/Cys25, Cys11/Cys29, and Cys15/Cys31.

Belongs to the short scorpion toxin superfamily. Potassium channel inhibitor family. Alpha-KTx 21 subfamily. Expressed by the venom gland.

It localises to the secreted. In terms of biological role, toxin that blocks voltage-gated potassium channels (Kv). In Tityus metuendus (Scorpion), this protein is Potassium channel toxin.